Here is a 684-residue protein sequence, read N- to C-terminus: Threonine--tRNA ligase (684 aa).

The TGS domain maps to 1–66 (MTAVASSAPA…DTDVEVTPVA (66 aa)). Positions 261–567 (DHRKLGVELD…LTEHYAGAFP (307 aa)) are catalytic. Zn(2+) contacts are provided by cysteine 366, histidine 417, and histidine 544.

It belongs to the class-II aminoacyl-tRNA synthetase family. In terms of assembly, homodimer. It depends on Zn(2+) as a cofactor.

Its subcellular location is the cytoplasm. It carries out the reaction tRNA(Thr) + L-threonine + ATP = L-threonyl-tRNA(Thr) + AMP + diphosphate + H(+). Its function is as follows. Catalyzes the attachment of threonine to tRNA(Thr) in a two-step reaction: L-threonine is first activated by ATP to form Thr-AMP and then transferred to the acceptor end of tRNA(Thr). Also edits incorrectly charged L-seryl-tRNA(Thr). The polypeptide is Threonine--tRNA ligase (Mycolicibacterium smegmatis (strain ATCC 700084 / mc(2)155) (Mycobacterium smegmatis)).